The primary structure comprises 202 residues: Nucleoid occlusion factor SlmA (202 aa).

The 62-residue stretch at 14–75 (KERQQQVLEV…ALIERIEQTL (62 aa)) folds into the HTH tetR-type domain. Residues 38-57 (TTERLAKAVGVSEGALYRYF) constitute a DNA-binding region (H-T-H motif).

Belongs to the nucleoid occlusion factor SlmA family. Homodimer. Interacts with FtsZ.

Its subcellular location is the cytoplasm. The protein resides in the nucleoid. Functionally, required for nucleoid occlusion (NO) phenomenon, which prevents Z-ring formation and cell division over the nucleoid. Acts as a DNA-associated cell division inhibitor that binds simultaneously chromosomal DNA and FtsZ, and disrupts the assembly of FtsZ polymers. SlmA-DNA-binding sequences (SBS) are dispersed on non-Ter regions of the chromosome, preventing FtsZ polymerization at these regions. This Actinobacillus pleuropneumoniae serotype 5b (strain L20) protein is Nucleoid occlusion factor SlmA.